Consider the following 258-residue polypeptide: Heat-labile enterotoxin A chain (258 aa).

Positions 1–18 are cleaved as a signal peptide; sequence MKNITFIFFILLASPLYA. Residue 25–39 coordinates NAD(+); sequence RADSRPPDEIKRSGG. Residue Glu-130 is part of the active site. The cysteines at positions 205 and 217 are disulfide-linked.

Belongs to the enterotoxin A family. As to quaternary structure, heterohexamer of one A chain and of five B chains.

Functionally, the biological activity of the toxin is produced by the A chain, which activates intracellular adenyl cyclase. This Escherichia coli protein is Heat-labile enterotoxin A chain (eltA).